The chain runs to 247 residues: Adenosylcobinamide-GDP ribazoletransferase (247 aa).

5 consecutive transmembrane segments (helical) span residues 34-54, 59-79, 113-133, 138-158, and 194-214; these read IITFPLIGLLLGAISGLVFMV, CGVPLAALFSVLVLALMTGGF, GGLALIFVVLAKILVLSELAL, ILALLAAACAVSRGTAALLMY, and VLLPGMHGVAAMVVTMVAIFI.

Belongs to the CobS family. Mg(2+) serves as cofactor.

It is found in the cell inner membrane. It carries out the reaction alpha-ribazole + adenosylcob(III)inamide-GDP = adenosylcob(III)alamin + GMP + H(+). It catalyses the reaction alpha-ribazole 5'-phosphate + adenosylcob(III)inamide-GDP = adenosylcob(III)alamin 5'-phosphate + GMP + H(+). It functions in the pathway cofactor biosynthesis; adenosylcobalamin biosynthesis; adenosylcobalamin from cob(II)yrinate a,c-diamide: step 7/7. In terms of biological role, joins adenosylcobinamide-GDP and alpha-ribazole to generate adenosylcobalamin (Ado-cobalamin). Also synthesizes adenosylcobalamin 5'-phosphate from adenosylcobinamide-GDP and alpha-ribazole 5'-phosphate. This Shigella boydii serotype 4 (strain Sb227) protein is Adenosylcobinamide-GDP ribazoletransferase.